The sequence spans 112 residues: Large ribosomal subunit protein eL30 (112 aa).

This sequence belongs to the eukaryotic ribosomal protein eL30 family.

This Euphorbia esula (Leafy spurge) protein is Large ribosomal subunit protein eL30 (RPL30).